A 193-amino-acid polypeptide reads, in one-letter code: ATP-dependent Clp protease proteolytic subunit 2 (193 aa).

Ser98 acts as the Nucleophile in catalysis. The active site involves His123.

It belongs to the peptidase S14 family. In terms of assembly, fourteen ClpP subunits assemble into 2 heptameric rings which stack back to back to give a disk-like structure with a central cavity, resembling the structure of eukaryotic proteasomes.

The protein resides in the cytoplasm. The enzyme catalyses Hydrolysis of proteins to small peptides in the presence of ATP and magnesium. alpha-casein is the usual test substrate. In the absence of ATP, only oligopeptides shorter than five residues are hydrolyzed (such as succinyl-Leu-Tyr-|-NHMec, and Leu-Tyr-Leu-|-Tyr-Trp, in which cleavage of the -Tyr-|-Leu- and -Tyr-|-Trp bonds also occurs).. Cleaves peptides in various proteins in a process that requires ATP hydrolysis. Has a chymotrypsin-like activity. Plays a major role in the degradation of misfolded proteins. This is ATP-dependent Clp protease proteolytic subunit 2 from Bacillus cereus (strain ATCC 14579 / DSM 31 / CCUG 7414 / JCM 2152 / NBRC 15305 / NCIMB 9373 / NCTC 2599 / NRRL B-3711).